Reading from the N-terminus, the 799-residue chain is Elongation factor G, mitochondrial (799 aa).

The transit peptide at 1–33 directs the protein to the mitochondrion; the sequence is MRSPSLARLQTRAVFGLTRSARFQPQTLLRQRC. The tr-type G domain occupies 97–384; that stretch reads DKCRNIGIAA…GVIDYLPNPA (288 aa). GTP is bound by residues 106 to 113, 182 to 186, and 236 to 239; these read AHIDSGKT, DTPGH, and NKMD.

Belongs to the TRAFAC class translation factor GTPase superfamily. Classic translation factor GTPase family. EF-G/EF-2 subfamily.

It is found in the mitochondrion. The protein operates within protein biosynthesis; polypeptide chain elongation. Mitochondrial GTPase that catalyzes the GTP-dependent ribosomal translocation step during translation elongation. During this step, the ribosome changes from the pre-translocational (PRE) to the post-translocational (POST) state as the newly formed A-site-bound peptidyl-tRNA and P-site-bound deacylated tRNA move to the P and E sites, respectively. Catalyzes the coordinated movement of the two tRNA molecules, the mRNA and conformational changes in the ribosome. The sequence is that of Elongation factor G, mitochondrial (mef1) from Penicillium rubens (strain ATCC 28089 / DSM 1075 / NRRL 1951 / Wisconsin 54-1255) (Penicillium chrysogenum).